Here is a 468-residue protein sequence, read N- to C-terminus: Tyrosine-protein phosphatase YopH (468 aa).

The tract at residues 127–194 (ARGHVSSHSH…TVSPYGPEAR (68 aa)) is disordered. Over residues 130 to 141 (HVSSHSHSALHA) the composition is skewed to low complexity. The region spanning 152-461 (SHLDPRTPPL…DVLIKLAEGQ (310 aa)) is the Tyrosine-protein phosphatase domain. Cys403 functions as the Phosphocysteine intermediate in the catalytic mechanism.

It belongs to the protein-tyrosine phosphatase family. Non-receptor class subfamily.

The protein localises to the secreted. It carries out the reaction O-phospho-L-tyrosyl-[protein] + H2O = L-tyrosyl-[protein] + phosphate. In terms of biological role, essential virulence determinant. This protein is a protein tyrosine phosphatase. The essential function of YopH in Yersinia pathogenesis is host-protein dephosphorylation. It contributes to the ability of the bacteria to resist phagocytosis by peritoneal macrophages. The chain is Tyrosine-protein phosphatase YopH (yopH) from Yersinia pseudotuberculosis serotype I (strain IP32953).